The sequence spans 121 residues: UPF0102 protein Hhal_2103 (121 aa).

A disordered region spans residues 1–20 (MMAPQTTRNDPRQRGQEAEE). Residues 9-20 (NDPRQRGQEAEE) are compositionally biased toward basic and acidic residues.

It belongs to the UPF0102 family.

In Halorhodospira halophila (strain DSM 244 / SL1) (Ectothiorhodospira halophila (strain DSM 244 / SL1)), this protein is UPF0102 protein Hhal_2103.